The primary structure comprises 492 residues: Solute carrier family 2, facilitated glucose transporter member 1 (492 aa).

Met-1 is modified (N-acetylmethionine). Topologically, residues Met-1–Arg-11 are cytoplasmic. A helical transmembrane segment spans residues Leu-12 to Ile-33. Topologically, residues Asn-34 to Ser-66 are extracellular. Asn-45 carries N-linked (GlcNAc...) asparagine glycosylation. A helical membrane pass occupies residues Leu-67–Val-87. Over Asn-88–Phe-90 the chain is Cytoplasmic. A helical membrane pass occupies residues Gly-91 to Phe-112. At Ser-113–Glu-120 the chain is on the extracellular side. The chain crosses the membrane as a helical span at residues Met-121 to Val-144. Residues Gly-145–Ala-155 are Cytoplasmic-facing. The helical transmembrane segment at Leu-156–Leu-176 threads the bilayer. Gln-161 contacts D-glucose. Residues Asp-177 to Leu-185 are Extracellular-facing. A helical transmembrane segment spans residues Trp-186–Phe-206. Residues Cys-207–Pro-271 are Cytoplasmic-facing. Ser-226 is subject to Phosphoserine. Residues Ile-272–Tyr-293 traverse the membrane as a helical segment. Residues Gln-282–Gln-283 and Asn-288 each bind D-glucose. The Extracellular portion of the chain corresponds to Ser-294 to Pro-306. The helical transmembrane segment at Val-307–Val-328 threads the bilayer. Asn-317 is a D-glucose binding site. Residues Glu-329–Arg-334 lie on the Cytoplasmic side of the membrane. The helical transmembrane segment at Thr-335–Leu-355 threads the bilayer. Residues Ala-356 to Ser-365 are Extracellular-facing. The chain crosses the membrane as a helical span at residues Tyr-366–Trp-388. Residues Glu-380 and Trp-388 each contribute to the D-glucose site. At Phe-389–Pro-401 the chain is on the cytoplasmic side. The chain crosses the membrane as a helical span at residues Ala-402–Phe-422. At Gln-423–Cys-429 the chain is on the extracellular side. A helical transmembrane segment spans residues Gly-430 to Phe-450. Over Lys-451–Val-492 the chain is Cytoplasmic. Ser-465 carries the post-translational modification Phosphoserine. The segment at Arg-468–Val-492 is disordered. Thr-478 is modified (phosphothreonine). A Phosphoserine modification is found at Ser-490.

It belongs to the major facilitator superfamily. Sugar transporter (TC 2.A.1.1) family. Glucose transporter subfamily. As to quaternary structure, found in a complex with ADD2, DMTN and SLC2A1. Interacts (via C-terminus cytoplasmic region) with DMTN. Interacts with SNX27; the interaction is required when endocytosed to prevent degradation in lysosomes and promote recycling to the plasma membrane. Interacts with STOM. Interacts with GIPC (via PDZ domain). Interacts with SGTA (via Gln-rich region). Interacts with isoform 1 of BSG. Interacts with SMIM43; the interaction may promote SLC2A1-mediated glucose transport to meet the energy needs of mesendoderm differentiation. Phosphorylation at Ser-226 by PKC promotes glucose uptake by increasing cell membrane localization. In terms of tissue distribution, detected in osteoblastic cells (at protein level). Detected in brain, and at lower levels in kidney, heart and lung.

The protein resides in the cell membrane. It localises to the photoreceptor inner segment. The enzyme catalyses D-glucose(out) = D-glucose(in). With respect to regulation, the uptake of glucose is inhibited by cytochalasin B. Glucose uptake is increased in response to phorbol ester 12-O-tetradecanoylphorbol-13-acetate (TPA) treatment: TPA-induced glucose uptake requires phosphorylation at Ser-226. Functionally, facilitative glucose transporter, which is responsible for constitutive or basal glucose uptake. Has a very broad substrate specificity; can transport a wide range of aldoses including both pentoses and hexoses. Most important energy carrier of the brain: present at the blood-brain barrier and assures the energy-independent, facilitative transport of glucose into the brain. In association with BSG and NXNL1, promotes retinal cone survival by increasing glucose uptake into photoreceptors. Required for mesendoderm differentiation. The sequence is that of Solute carrier family 2, facilitated glucose transporter member 1 from Rattus norvegicus (Rat).